The chain runs to 596 residues: Aspartate--tRNA(Asp/Asn) ligase (596 aa).

Glu169 serves as a coordination point for L-aspartate. The tract at residues 193-196 (QLFK) is aspartate. Residue Arg215 participates in L-aspartate binding. ATP-binding positions include 215 to 217 (RDE) and Gln224. His447 provides a ligand contact to L-aspartate. Residue Glu481 participates in ATP binding. Residue Arg488 participates in L-aspartate binding. 533–536 (GWDR) lines the ATP pocket. Residues 559–596 (GYDPLTQAPAPITAQQRKEAGVDFKPEAKKADPGATKA) are disordered. Residues 574-590 (QRKEAGVDFKPEAKKAD) show a composition bias toward basic and acidic residues.

The protein belongs to the class-II aminoacyl-tRNA synthetase family. Type 1 subfamily. As to quaternary structure, homodimer.

The protein localises to the cytoplasm. It carries out the reaction tRNA(Asx) + L-aspartate + ATP = L-aspartyl-tRNA(Asx) + AMP + diphosphate. Functionally, aspartyl-tRNA synthetase with relaxed tRNA specificity since it is able to aspartylate not only its cognate tRNA(Asp) but also tRNA(Asn). Reaction proceeds in two steps: L-aspartate is first activated by ATP to form Asp-AMP and then transferred to the acceptor end of tRNA(Asp/Asn). The protein is Aspartate--tRNA(Asp/Asn) ligase of Arthrobacter sp. (strain FB24).